Consider the following 381-residue polypeptide: Homoserine O-succinyltransferase (381 aa).

One can recognise an AB hydrolase-1 domain in the interval 45–360 (NAVLVCHALN…PHGHDAFLLD (316 aa)). Ser-151 acts as the Nucleophile in catalysis. A substrate-binding site is contributed by Arg-221. Residues Asp-321 and His-354 contribute to the active site. Residue Asp-355 participates in substrate binding.

The protein belongs to the AB hydrolase superfamily. MetX family. Homodimer.

The protein localises to the cytoplasm. The catalysed reaction is L-homoserine + succinyl-CoA = O-succinyl-L-homoserine + CoA. Its pathway is amino-acid biosynthesis; L-methionine biosynthesis via de novo pathway; O-succinyl-L-homoserine from L-homoserine: step 1/1. Functionally, transfers a succinyl group from succinyl-CoA to L-homoserine, forming succinyl-L-homoserine. The chain is Homoserine O-succinyltransferase from Burkholderia thailandensis (strain ATCC 700388 / DSM 13276 / CCUG 48851 / CIP 106301 / E264).